We begin with the raw amino-acid sequence, 271 residues long: Putative pyruvate, phosphate dikinase regulatory protein (271 aa).

ADP is bound at residue Gly-153–Thr-160.

The protein belongs to the pyruvate, phosphate/water dikinase regulatory protein family. PDRP subfamily.

The enzyme catalyses N(tele)-phospho-L-histidyl/L-threonyl-[pyruvate, phosphate dikinase] + ADP = N(tele)-phospho-L-histidyl/O-phospho-L-threonyl-[pyruvate, phosphate dikinase] + AMP + H(+). It carries out the reaction N(tele)-phospho-L-histidyl/O-phospho-L-threonyl-[pyruvate, phosphate dikinase] + phosphate + H(+) = N(tele)-phospho-L-histidyl/L-threonyl-[pyruvate, phosphate dikinase] + diphosphate. In terms of biological role, bifunctional serine/threonine kinase and phosphorylase involved in the regulation of the pyruvate, phosphate dikinase (PPDK) by catalyzing its phosphorylation/dephosphorylation. The chain is Putative pyruvate, phosphate dikinase regulatory protein from Shouchella clausii (strain KSM-K16) (Alkalihalobacillus clausii).